Here is a 482-residue protein sequence, read N- to C-terminus: Bile acid receptor (482 aa).

Residue K132 forms a Glycyl lysine isopeptide (Lys-Gly) (interchain with G-Cter in SUMO1) linkage. A DNA-binding region (nuclear receptor) is located at residues 134–209 (DELCVVCGDR…MGMLAECLLT (76 aa)). The NR C4-type zinc-finger motif lies at 137 to 157 (CVVCGDRASGYHYNALTCEGC). Phosphoserine; by PKC/PRKCA is present on residues S145 and S164. K167 is subject to N6-acetyllysine; by EP300. The segment at 173 to 197 (CKNGGNCVMDMYMRRKCQECRLRKC) adopts an NR C4-type zinc-finger fold. Residue K216 is modified to N6-methyllysine; by SETD7. The residue at position 223 (K223) is an N6-acetyllysine; by EP300. Residues 229–240 (AIHEDSEGRDLR) show a composition bias toward basic and acidic residues. Residues 229–253 (AIHEDSEGRDLRQVTSTTKSCREKT) form a disordered region. One can recognise an NR LBD domain in the interval 258–482 (DQQNLLHYIM…PLLCEIWDVQ (225 aa)). Residue K285 forms a Glycyl lysine isopeptide (Lys-Gly) (interchain with G-Cter in SUMO1) linkage. 3 residues coordinate chenodeoxycholate: R341, Y371, and Y379. A Phosphothreonine; by PKC/PRKCZ modification is found at T452. A chenodeoxycholate-binding site is contributed by H457.

Belongs to the nuclear hormone receptor family. NR1 subfamily. As to quaternary structure, heterodimer with RXRA; the heterodimerization enhances the binding affinity for LXXLL motifs from coactivators. Binds DNA predominantly as a heterodimer with RXRA. After activation by agonist binding interacts with coactivators. Interacts with NCOA1, NCOA2, PPARGC1A, CARM1, SETD7, PRMT1, GPS2, SMARCA4 and MED1, EP300 and SMARCD1. Interacts with XRCC5 and XRCC6; decreasing NR1H4/FXR transactivation activity towards ABCB11/BSEP. Interacts with PAGR1 AND NCOA6; indicative for an association with an MLL2/MLL3 complex (ASCOM). Post-translationally, acetylated by EP300. Lys-223 as is the major acetylation site for EP300; the dynamicly regulated acetylation inhibits heterodimerization with RXRA and transactivation activity. Deacetylated by SIRT1. In terms of processing, methylation may increase transactivation of target genes. Phosphorylation by PKC/PRKCA increases transactivation activity by promoting association with PPARGC1A. Post-translationally, sumoylated upon ligand binding.

It is found in the nucleus. In terms of biological role, ligand-activated transcription factor. Receptor for bile acids (BAs) such as chenodeoxycholic acid (CDCA), lithocholic acid, deoxycholic acid (DCA) and allocholic acid (ACA). Plays a essential role in BA homeostasis through the regulation of genes involved in BA synthesis, conjugation and enterohepatic circulation. Also regulates lipid and glucose homeostasis and is involved innate immune response. The FXR-RXR heterodimer binds predominantly to farnesoid X receptor response elements (FXREs) containing two inverted repeats of the consensus sequence 5'-AGGTCA-3' in which the monomers are spaced by 1 nucleotide (IR-1) but also to tandem repeat DR1 sites with lower affinity, and can be activated by either FXR or RXR-specific ligands. It is proposed that monomeric nuclear receptors such as NR5A2/LRH-1 bound to coregulatory nuclear responsive element (NRE) halfsites located in close proximity to FXREs modulate transcriptional activity. In the liver activates transcription of the corepressor NR0B2 thereby indirectly inhibiting CYP7A1 and CYP8B1 (involved in BA synthesis) implicating at least in part histone demethylase KDM1A resulting in epigenomic repression, and SLC10A1/NTCP (involved in hepatic uptake of conjugated BAs). Activates transcription of the repressor MAFG (involved in regulation of BA synthesis). Activates transcription of SLC27A5/BACS and BAAT (involved in BA conjugation), ABCB11/BSEP (involved in bile salt export) by directly recruiting histone methyltransferase CARM1, and ABCC2/MRP2 (involved in secretion of conjugated BAs) and ABCB4 (involved in secretion of phosphatidylcholine in the small intestine). Activates transcription of SLC27A5/BACS and BAAT (involved in BA conjugation), ABCB11/BSEP (involved in bile salt export) by directly recruiting histone methyltransferase CARM1, and ABCC2/MRP2 (involved in secretion of conjugated BAs) and ABCB4 (involved in secretion of phosphatidylcholine in the small intestine). In the intestine activates FGF19 expression and secretion leading to hepatic CYP7A1 repression. The function also involves the coordinated induction of hepatic KLB/beta-klotho expression. Regulates transcription of liver UGT2B4 and SULT2A1 involved in BA detoxification; binding to the UGT2B4 promoter seems to imply a monomeric transactivation independent of RXRA. Modulates lipid homeostasis by activating liver NR0B2/SHP-mediated repression of SREBF1 (involved in de novo lipogenesis), expression of PLTP (involved in HDL formation), SCARB1 (involved in HDL hepatic uptake), APOE, APOC1, APOC4, PPARA (involved in beta-oxidation of fatty acids), VLDLR and SDC1 (involved in the hepatic uptake of LDL and IDL remnants), and inhibiting expression of MTTP (involved in VLDL assembly). Increases expression of APOC2 (promoting lipoprotein lipase activity implicated in triglyceride clearance). Transrepresses APOA1 involving a monomeric competition with NR2A1 for binding to a DR1 element. Also reduces triglyceride clearance by inhibiting expression of ANGPTL3 and APOC3 (both involved in inhibition of lipoprotein lipase). Involved in glucose homeostasis by modulating hepatic gluconeogenesis through activation of NR0B2/SHP-mediated repression of respective genes. Modulates glycogen synthesis (inducing phosphorylation of glycogen synthase kinase-3). Modulates glucose-stimulated insulin secretion and is involved in insulin resistance. Involved in intestinal innate immunity. Plays a role in protecting the distal small intestine against bacterial overgrowth and preservation of the epithelial barrier. Down-regulates inflammatory cytokine expression in several types of immune cells including macrophages and mononuclear cells. Mediates trans-repression of TLR4-induced cytokine expression; the function seems to require its sumoylation and prevents N-CoR nuclear receptor corepressor clearance from target genes such as IL1B and NOS2. Involved in the TLR9-mediated protective mechanism in intestinal inflammation. Plays an anti-inflammatory role in liver inflammation; proposed to inhibit pro-inflammatory (but not antiapoptotic) NF-kappa-B signaling. This chain is Bile acid receptor (NR1H4), found in Bos taurus (Bovine).